A 210-amino-acid polypeptide reads, in one-letter code: Ribosomal RNA small subunit methyltransferase G (210 aa).

S-adenosyl-L-methionine is bound by residues G76, M81, 127 to 128 (VE), and R145.

Belongs to the methyltransferase superfamily. RNA methyltransferase RsmG family.

The protein resides in the cytoplasm. It carries out the reaction guanosine(527) in 16S rRNA + S-adenosyl-L-methionine = N(7)-methylguanosine(527) in 16S rRNA + S-adenosyl-L-homocysteine. Its function is as follows. Specifically methylates the N7 position of guanine in position 527 of 16S rRNA. The sequence is that of Ribosomal RNA small subunit methyltransferase G from Acinetobacter baumannii (strain AB307-0294).